A 673-amino-acid chain; its full sequence is Glycine--tRNA ligase beta subunit (673 aa).

It belongs to the class-II aminoacyl-tRNA synthetase family. As to quaternary structure, tetramer of two alpha and two beta subunits.

The protein localises to the cytoplasm. It carries out the reaction tRNA(Gly) + glycine + ATP = glycyl-tRNA(Gly) + AMP + diphosphate. The chain is Glycine--tRNA ligase beta subunit from Lactococcus lactis subsp. cremoris (strain SK11).